The sequence spans 147 residues: Peroxynitrite isomerase (147 aa).

His-137 is a binding site for heme b.

The protein belongs to the nitrobindin family. As to quaternary structure, homodimer. It depends on heme b as a cofactor.

The enzyme catalyses peroxynitrite = nitrate. Its pathway is nitrogen metabolism. Functionally, heme-binding protein able to scavenge peroxynitrite and to protect free L-tyrosine against peroxynitrite-mediated nitration, by acting as a peroxynitrite isomerase that converts peroxynitrite to nitrate. Therefore, this protein likely plays a role in peroxynitrite sensing and in the detoxification of reactive nitrogen and oxygen species (RNS and ROS, respectively). Is able to bind nitric oxide (NO) in vitro, but may act as a sensor of peroxynitrite levels in vivo. In Frankia alni (strain DSM 45986 / CECT 9034 / ACN14a), this protein is Peroxynitrite isomerase.